We begin with the raw amino-acid sequence, 394 residues long: 8-amino-7-oxononanoate synthase (394 aa).

Substrate is bound at residue arginine 21. 112 to 113 (GY) serves as a coordination point for pyridoxal 5'-phosphate. Residue histidine 137 coordinates substrate. Pyridoxal 5'-phosphate contacts are provided by serine 183, histidine 211, and threonine 239. At lysine 242 the chain carries N6-(pyridoxal phosphate)lysine. Threonine 358 contributes to the substrate binding site.

The protein belongs to the class-II pyridoxal-phosphate-dependent aminotransferase family. BioF subfamily. In terms of assembly, homodimer. The cofactor is pyridoxal 5'-phosphate.

The enzyme catalyses 6-carboxyhexanoyl-[ACP] + L-alanine + H(+) = (8S)-8-amino-7-oxononanoate + holo-[ACP] + CO2. It participates in cofactor biosynthesis; biotin biosynthesis. In terms of biological role, catalyzes the decarboxylative condensation of pimeloyl-[acyl-carrier protein] and L-alanine to produce 8-amino-7-oxononanoate (AON), [acyl-carrier protein], and carbon dioxide. This is 8-amino-7-oxononanoate synthase from Burkholderia pseudomallei (strain K96243).